The primary structure comprises 216 residues: NKG2-D type II integral membrane protein (216 aa).

Residues 1–51 are Cytoplasmic-facing; that stretch reads MGWIRGRRSRHSWEMSEFHNYNLDLKKSDFSTRWQKQRCPVVKSKCRENAS. A helical; Signal-anchor for type II membrane protein transmembrane segment spans residues 52–72; the sequence is PFFFCCFIAVAMGIRFIIMVT. Over 73–216 the chain is Extracellular; it reads IWSAVFLNSL…NTYICMQRTV (144 aa). 4 cysteine pairs are disulfide-bonded: cysteine 96/cysteine 105, cysteine 99/cysteine 110, cysteine 127/cysteine 211, and cysteine 189/cysteine 203. A C-type lectin domain is found at 98 to 213; that stretch reads PCPKNWICYK…STPNTYICMQ (116 aa). N-linked (GlcNAc...) asparagine glycans are attached at residues asparagine 131, asparagine 163, and asparagine 202.

As to quaternary structure, homodimer; disulfide-linked. Heterohexamer composed of two subunits of KLRK1 and four subunits of HCST/DAP10. Interacts (via transmembrane domain) with HCST/DAP10 (via transmembrane domain); the interaction is required for KLRK1 NK cell surface and induces NK cell-mediated cytotoxicity. Does not interact with TYROBP. Interacts with CEACAM1; recruits PTPN6 that dephosphorylates VAV1. In terms of tissue distribution, expressed in natural killer (NK) cells, CD8(+) alpha-beta and gamma-delta T-cells. Expressed on essentially all CD56+CD3- NK cells from freshly isolated PBMC. Expressed in interferon-producing killer dendritic cells (IKDCs).

It is found in the cell membrane. Functionally, functions as an activating and costimulatory receptor involved in immunosurveillance upon binding to various cellular stress-inducible ligands displayed at the surface of autologous tumor cells and virus-infected cells. Provides both stimulatory and costimulatory innate immune responses on activated killer (NK) cells, leading to cytotoxic activity. Acts as a costimulatory receptor for T-cell receptor (TCR) in CD8(+) T-cell-mediated adaptive immune responses by amplifying T-cell activation. Stimulates perforin-mediated elimination of ligand-expressing tumor cells. Signaling involves calcium influx, culminating in the expression of TNF-alpha. Participates in NK cell-mediated bone marrow graft rejection. May play a regulatory role in differentiation and survival of NK cells. Binds to ligands belonging to various subfamilies of MHC class I-related glycoproteins including MICA, MICB, RAET1E, RAET1G, RAET1L/ULBP6, ULBP1, ULBP2, ULBP3 (ULBP2&gt;ULBP1&gt;ULBP3) and ULBP4. The sequence is that of NKG2-D type II integral membrane protein (KLRK1) from Homo sapiens (Human).